We begin with the raw amino-acid sequence, 2971 residues long: uncharacterized protein (2971 aa).

The tract at residues 929-964 (SANFSNGPEESSLSTRLHIQKKRKAKKQRLETRRQK) is disordered. Positions 936–945 (PEESSLSTRL) are enriched in polar residues. A compositionally biased stretch (basic residues) spans 946–955 (HIQKKRKAKK).

The protein localises to the plastid. The protein resides in the chloroplast. This is an uncharacterized protein from Chlamydomonas reinhardtii (Chlamydomonas smithii).